A 392-amino-acid polypeptide reads, in one-letter code: Succinate--CoA ligase [ADP-forming] subunit beta (392 aa).

In terms of domain architecture, ATP-grasp spans 9-248; the sequence is KGILKQFGVA…ITEEDPLEYE (240 aa). ATP-binding positions include Lys50, 57–59, Glu103, Met106, and Glu111; that span reads GRG. Mg(2+)-binding residues include Asn203 and Asp217. Residues Asn268 and 325–327 each bind substrate; that span reads GIV.

Belongs to the succinate/malate CoA ligase beta subunit family. Heterotetramer of two alpha and two beta subunits. Mg(2+) serves as cofactor.

It carries out the reaction succinate + ATP + CoA = succinyl-CoA + ADP + phosphate. The catalysed reaction is GTP + succinate + CoA = succinyl-CoA + GDP + phosphate. It functions in the pathway carbohydrate metabolism; tricarboxylic acid cycle; succinate from succinyl-CoA (ligase route): step 1/1. In terms of biological role, succinyl-CoA synthetase functions in the citric acid cycle (TCA), coupling the hydrolysis of succinyl-CoA to the synthesis of either ATP or GTP and thus represents the only step of substrate-level phosphorylation in the TCA. The beta subunit provides nucleotide specificity of the enzyme and binds the substrate succinate, while the binding sites for coenzyme A and phosphate are found in the alpha subunit. This Chlorobaculum parvum (strain DSM 263 / NCIMB 8327) (Chlorobium vibrioforme subsp. thiosulfatophilum) protein is Succinate--CoA ligase [ADP-forming] subunit beta.